The chain runs to 243 residues: UPF0688 protein C1orf174 (243 aa).

Disordered regions lie at residues 78 to 100 (NDSA…AEGS) and 132 to 243 (LAKT…DAEM). Low complexity predominate over residues 145-157 (SAGSGAEESNSSS). Phosphoserine occurs at positions 148 and 189. Positions 233-243 (DDDDDDDDAEM) are enriched in acidic residues.

It belongs to the UPF0688 family.

The protein localises to the nucleus. This Homo sapiens (Human) protein is UPF0688 protein C1orf174 (C1orf174).